The chain runs to 326 residues: Vacuolar protein sorting-associated protein 26A-A (326 aa).

Residues Thr306 to Ile326 form a disordered region. The segment covering Gln315–Ile326 has biased composition (low complexity).

This sequence belongs to the VPS26 family. As to quaternary structure, component of the heterotrimeric retromer cargo-selective complex (CSC) which is believed to associate with variable sorting nexins to form functionally distinct retromer complex variants.

It localises to the cytoplasm. The protein resides in the endosome membrane. It is found in the early endosome. Acts as a component of the retromer cargo-selective complex (CSC). The CSC is believed to be the core functional component of retromer or respective retromer complex variants acting to prevent missorting of selected transmembrane cargo proteins into the lysosomal degradation pathway. Retromer mediates retrograde transport of cargo proteins from endosomes to the trans-Golgi network (TGN). This Xenopus laevis (African clawed frog) protein is Vacuolar protein sorting-associated protein 26A-A (vps26a-a).